Consider the following 180-residue polypeptide: GTP cyclohydrolase 1 (180 aa).

Residues Cys71, His74, and Cys142 each contribute to the Zn(2+) site.

The protein belongs to the GTP cyclohydrolase I family. Homomer.

It catalyses the reaction GTP + H2O = 7,8-dihydroneopterin 3'-triphosphate + formate + H(+). The protein operates within cofactor biosynthesis; 7,8-dihydroneopterin triphosphate biosynthesis; 7,8-dihydroneopterin triphosphate from GTP: step 1/1. The protein is GTP cyclohydrolase 1 of Helicobacter pylori (strain P12).